A 759-amino-acid chain; its full sequence is MDASEEAKRVSIQVTSLSTQLIESVDKQSHLEEQLNKSLKTIASQKAAIENYNQLKEDYNTLKRELSDRDDEVKRLREDIAKENELRTKAEEEADKLNKEVEDLTASLFDEANNMVADARKEKYAIEILNKRLTEQLREKDTLLDTLTLQLKNLKKVMHSLDNESTVTNNSNRYSTILSDSATSSSTSLNKVPTSYSLASQDIYSGIVYSPSISSIRYDISLYNEFLKFVAALPRCENIKATSTESKLIRRLVNDEIQPILKIDNASGIGWLVKKTLLSLIIDGLVVVEPLSGVNATYQIGYNSSSPAKQATSNMPKMFKFPLDSPPVAVHAACSFCGESRDDIIEHARMYILKTLHKTDDGKEQVTNTYPLCHWCLLKLRQTCEIFAFLRSLKVGAWHLEKLTTQNITKEDLEKFSEVTKHTKRDGRVSSQDKKTKRLSFMAGLGINSSTKNKPKMEIFSSETNAKPGQPTTNIQRAWLQLCKLRCILHWTHIGIWAVDDSISSKIGPLVEDDSDEDQNDAISVRLQDKALWKQDAKRPFSSSSAEESQKSDAFDFESGDMENEITGESSSDESSSDGSSTDNSTADSSSEDESSLADSTTSSADSSSPESIDNGEGDDTVTKDDKSSIKSANNNEENSDCGDKKGRSIIKKKAPQRKIQKKKLLQDLDDLEEQFREESAIDQTEFENAESNVKQNISSKRASSGDENSKKDNNEKTLKTNLTIGDKTQEQIGENSPSSGLHASSSNDDNFDDAQEQQ.

An N-acetylmethionine modification is found at Met1. A coiled-coil region spans residues 26-164 (DKQSHLEEQL…KKVMHSLDNE (139 aa)). A Phosphothreonine modification is found at Thr168. Phosphoserine is present on Ser171. The tract at residues 451-508 (TKNKPKMEIFSSETNAKPGQPTTNIQRAWLQLCKLRCILHWTHIGIWAVDDSISSKIG) is required for proper polarized localization of the protein. At Ser515 the chain carries Phosphoserine. A disordered region spans residues 538 to 759 (KRPFSSSSAE…DNFDDAQEQQ (222 aa)). Positions 555 to 576 (FDFESGDMENEITGESSSDESS) are enriched in acidic residues. 2 stretches are compositionally biased toward low complexity: residues 577-589 (SDGS…TADS) and 597-612 (LADS…SPES). The span at 648-664 (RSIIKKKAPQRKIQKKK) shows a compositional bias: basic residues. Positions 651–682 (IKKKAPQRKIQKKKLLQDLDDLEEQFREESAI) form a coiled coil. A compositionally biased stretch (polar residues) spans 690–703 (AESNVKQNISSKRA). Over residues 704–719 (SSGDENSKKDNNEKTL) the composition is skewed to basic and acidic residues. The span at 731–744 (EQIGENSPSSGLHA) shows a compositional bias: polar residues. Positions 732 to 759 (QIGENSPSSGLHASSSNDDNFDDAQEQQ) form a coiled coil. Positions 750–759 (DNFDDAQEQQ) are enriched in acidic residues.

The protein belongs to the SEC2 family. Interacts with SEC4. Interacts with YPT32, preferentially in its GTP-bound form.

It is found in the bud neck. It localises to the bud tip. The protein localises to the cytoplasmic vesicle. The protein resides in the secretory vesicle. In terms of biological role, guanine nucleotide exchange factor for SEC4, catalyzing the dissociation of GDP from SEC4 and also potently promoting binding of GTP. Activation of SEC4 by SEC2 is needed for the directed transport of vesicles to sites of exocytosis. Binds the Rab GTPase YPT32, but does not have exchange activity on YPT32. This is Rab guanine nucleotide exchange factor SEC2 (SEC2) from Saccharomyces cerevisiae (strain ATCC 204508 / S288c) (Baker's yeast).